The chain runs to 349 residues: Peroxisomal acyl-coenzyme A thioester hydrolase 1 (349 aa).

Residues D259, S282, and Q333 each act as charge relay system in the active site. The short motif at 347 to 349 (AKF) is the Microbody targeting signal element.

This sequence belongs to the C/M/P thioester hydrolase family.

The protein resides in the peroxisome. It carries out the reaction hexadecanoyl-CoA + H2O = hexadecanoate + CoA + H(+). In terms of biological role, acyl-coenzyme A (acyl-CoA) thioesterases are a group of enzymes that catalyze the hydrolysis of acyl-CoAs to the free fatty acid and coenzyme A (CoASH), providing the potential to regulate intracellular levels of acyl-CoAs, free fatty acids and CoASH. Contributes to growth on fatty acids. The polypeptide is Peroxisomal acyl-coenzyme A thioester hydrolase 1 (TES1) (Saccharomyces cerevisiae (strain ATCC 204508 / S288c) (Baker's yeast)).